We begin with the raw amino-acid sequence, 180 residues long: ATP-dependent protease subunit HslV (180 aa).

Residue threonine 8 is part of the active site. Serine 165, cysteine 168, and threonine 171 together coordinate Na(+).

The protein belongs to the peptidase T1B family. HslV subfamily. A double ring-shaped homohexamer of HslV is capped on each side by a ring-shaped HslU homohexamer. The assembly of the HslU/HslV complex is dependent on binding of ATP.

The protein localises to the cytoplasm. The catalysed reaction is ATP-dependent cleavage of peptide bonds with broad specificity.. With respect to regulation, allosterically activated by HslU binding. Protease subunit of a proteasome-like degradation complex believed to be a general protein degrading machinery. The polypeptide is ATP-dependent protease subunit HslV (Staphylococcus saprophyticus subsp. saprophyticus (strain ATCC 15305 / DSM 20229 / NCIMB 8711 / NCTC 7292 / S-41)).